The chain runs to 219 residues: Large ribosomal subunit protein uL3 (219 aa).

Positions 133-153 are disordered; that stretch reads GRASHGNSRSHNVPGSIGMAQ. Q153 bears the N5-methylglutamine mark.

It belongs to the universal ribosomal protein uL3 family. In terms of assembly, part of the 50S ribosomal subunit. Forms a cluster with proteins L14 and L19. Methylated by PrmB.

In terms of biological role, one of the primary rRNA binding proteins, it binds directly near the 3'-end of the 23S rRNA, where it nucleates assembly of the 50S subunit. This chain is Large ribosomal subunit protein uL3, found in Burkholderia mallei (strain NCTC 10247).